The sequence spans 605 residues: Protein DENND6A (605 aa).

A disordered region spans residues 1-20; that stretch reads MALPGPAVFGPGSRGSLDEA. Residues 60-239 form the uDENN domain; that stretch reads HCVCVVGFDL…KVRIPTCHDK (180 aa). The residue at position 124 (Ser124) is a Phosphoserine. In terms of domain architecture, cDENN spans 265 to 390; it reads EVDLFRCFCP…VKVKKLKNLK (126 aa). The 134-residue stretch at 392–525 folds into the dDENN domain; the sequence is LDSKPGVYTS…KTRRKEMTQK (134 aa). Position 507 is an N6-methyllysine (Lys507).

This sequence belongs to the DENND6 family.

The protein localises to the recycling endosome. Its subcellular location is the cytoplasm. In terms of biological role, guanine nucleotide exchange factor (GEF) for RAB14. Component of an endocytic recycling pathway that is required for the control of ADAM10 transport, shedding of N-cadherin/CDH2 by ADAM9 or ADAM10 and regulation of cell-cell junctions. Required for RAB14 recruitment to recycling endosomes. This Mus musculus (Mouse) protein is Protein DENND6A (Dennd6a).